The sequence spans 33 residues: Toxin BcV (33 aa).

Cys6 and Cys30 are joined by a disulfide.

Its subcellular location is the secreted. The protein localises to the nematocyst. In terms of biological role, potently and reversibly blocks mammalian Kv11/KCNH/ERG voltage-gated potassium channels. Acts as a gating-modifier toxin that shifts the voltage-dependence of ERG activation in the positive direction and suppresses its current amplitudes elicited by strong depolarizing pulses that maximally activate the channels. The polypeptide is Toxin BcV (Bunodosoma caissarum (Sea anemone)).